Consider the following 729-residue polypeptide: Probable ATP-dependent RNA helicase DDX17 (729 aa).

Positions 20–115 are disordered; it reads EAATVASATG…PPKKFGNPGE (96 aa). Position 64 is a phosphoserine (serine 64). Positions 86–95 are enriched in basic and acidic residues; it reads GDRDRDRDRG. Positions 96–105 are enriched in gly residues; sequence GFGARGGGGL. N6-acetyllysine; by EP300 is present on residues lysine 108, lysine 109, and lysine 121. Residue lysine 129 forms a Glycyl lysine isopeptide (Lys-Gly) (interchain with G-Cter in SUMO); alternate linkage. Residue lysine 129 forms a Glycyl lysine isopeptide (Lys-Gly) (interchain with G-Cter in SUMO1); alternate linkage. Lysine 129 is covalently cross-linked (Glycyl lysine isopeptide (Lys-Gly) (interchain with G-Cter in SUMO2); alternate). Positions 171-199 match the Q motif motif; it reads FAFHHANFPQYVMDVLMDQHFTEPTPIQC. One can recognise a Helicase ATP-binding domain in the interval 202–377; sequence FPLALSGRDM…EDFLRDYTQI (176 aa). Position 215–222 (215–222) interacts with ATP; the sequence is AQTGSGKT. The DEAD box motif lies at 325 to 328; it reads DEAD. Residues 405–552 enclose the Helicase C-terminal domain; the sequence is KLIQLMEEIM…AINPKLMQLV (148 aa). Threonine 523 is modified (phosphothreonine). Residue lysine 528 forms a Glycyl lysine isopeptide (Lys-Gly) (interchain with G-Cter in SUMO2) linkage. Residues 547–729 are transactivation domain; sequence KLMQLVDHRG…PPPPPPPSRK (183 aa). Disordered regions lie at residues 551–623 and 659–729; these read LVDH…GSPN and TYGA…PSRK. A compositionally biased stretch (polar residues) spans 568–578; sequence RTTSSANNPNL. Residues 583 to 610 show a composition bias toward basic and acidic residues; that stretch reads ECDRRLRGVKDGGRRDSASYRDRSETDR. Residues 659 to 688 are compositionally biased toward low complexity; sequence TYGASSTTSTGRSSQSSSQQFSGIGRSGQQ. Arginine 684 is subject to Omega-N-methylarginine. The span at 689-698 shows a compositional bias: polar residues; sequence PQPLMSQQFA. Pro residues predominate over residues 717 to 729; it reads YPPPPPPPPPSRK. The interval 718 to 726 is interaction with YAP1; sequence PPPPPPPPP.

The protein belongs to the DEAD box helicase family. DDX5/DBP2 subfamily. Interacts with DDX5 in an RNA-independent manner. Interacts with CDK9 transcription elongation complex under basal conditions. Following cell stimulation with poly(I:C), a synthetic double-stranded RNA mimicking viral infection, the interaction with CDK9 is decreased. Interacts with ESR1 in an estrogen-independent manner. Interacts with HNRNPH1; this interaction is important for the regulation of alternative splicing on G-quadruplex structures. At high, but not low, cell density, interacts with DROSHA and DGCR8, the core components of the microprocessor complex involved in the maturation of primary microRNAs (pri-miRNAs) into pre-miRNAs. The interaction with DGCR8 is reduced during mitosis. At low, but not high, cell density, interacts with YAP1 and with its paralog, WWTR1/TAZ. Interactions with DROSHA and YAP1 are mutually exclusive. In vitro, the pre-miRNA processing activity of the DDX17-containing microprocessor complex is weaker than that of the DROSHA/DGCR8 microprocessor complex devoid of DDX17. Interacts with UPF3B. Interacts with NFAT5; this interaction leads to DDX17 recruitment to LNC2 and S100A4 promoters and NFAT5-mediated DDX17-enhanced transactivation. Interacts with HDAC1, HDAC2 and HDAC3; this interaction with HDAC1 and HDAC3, but not HDAC2, depends upon DDX17 acetylation. Interacts with ZC3HAV1 (via N-terminal domain) in an RNA-independent manner. Interacts with EXOSC3/RRP40 and EXOSC5/RRP46; this interaction may be indirect and mediated by ZC3HAV1-binding. Interacts with EP300; this interaction leads to acetylation at lysine residues. Interacts with CREBBP/CBP and KAT2B/P/CAF. Directly interacts with CTNNB1. Interacts with MYOD1. Interacts with TP53. Interacts with DCP1A in an RNA-independent manner. Interacts with DCP2 in an RNA-dependent manner. Interacts with DHX36; this interaction occurs in a RNA-dependent manner. Interacts with ERCC6. Post-translationally, sumoylation significantly increases stability. It also promotes interaction specifically with HDAC1 (but not HDAC2, nor HDAC3) and strongly stimulates ESR1 and TP53 coactivation. In terms of processing, acetylation at lysine residues stabilizes the protein, stimulates interaction with HDAC1 and HDAC3, but not HDAC2, and represses ESR1 and TP53 coactivation activity. As to expression, widely expressed. Low expression, if any, in normal colonic epithelial cells (at protein level). Levels tend to increase during colon cancer progression, from very low in benign hyperplastic polyps to very high in tubular and villous adenomas.

The protein resides in the nucleus. It localises to the nucleolus. It is found in the cytoplasm. Its subcellular location is the cytosol. It catalyses the reaction ATP + H2O = ADP + phosphate + H(+). In terms of biological role, as an RNA helicase, unwinds RNA and alters RNA structures through ATP binding and hydrolysis. Involved in multiple cellular processes, including pre-mRNA splicing, alternative splicing, ribosomal RNA processing and miRNA processing, as well as transcription regulation. Regulates the alternative splicing of exons exhibiting specific features. For instance, promotes the inclusion of AC-rich alternative exons in CD44 transcripts. This function requires the RNA helicase activity. Affects NFAT5 and histone macro-H2A.1/MACROH2A1 alternative splicing in a CDK9-dependent manner. In NFAT5, promotes the introduction of alternative exon 4, which contains 2 stop codons and may target NFAT5 exon 4-containing transcripts to nonsense-mediated mRNA decay, leading to the down-regulation of NFAT5 protein. Affects splicing of mediators of steroid hormone signaling pathway, including kinases that phosphorylates ESR1, such as CDK2, MAPK1 and GSK3B, and transcriptional regulators, such as CREBBP, MED1, NCOR1 and NCOR2. By affecting GSK3B splicing, participates in ESR1 and AR stabilization. In myoblasts and epithelial cells, cooperates with HNRNPH1 to control the splicing of specific subsets of exons. In addition to binding mature mRNAs, also interacts with certain pri-microRNAs, including MIR663/miR-663a, MIR99B/miR-99b, and MIR6087/miR-6087. Binds pri-microRNAs on the 3' segment flanking the stem loop via the 5'-[ACG]CAUC[ACU]-3' consensus sequence. Required for the production of subsets of microRNAs, including MIR21 and MIR125B1. May be involved not only in microRNA primary transcript processing, but also stabilization. Participates in MYC down-regulation at high cell density through the production of MYC-targeting microRNAs. Along with DDX5, may be involved in the processing of the 32S intermediate into the mature 28S ribosomal RNA. Promoter-specific transcription regulator, functioning as a coactivator or corepressor depending on the context of the promoter and the transcriptional complex in which it exists. Enhances NFAT5 transcriptional activity. Synergizes with TP53 in the activation of the MDM2 promoter; this activity requires acetylation on lysine residues. May also coactivate MDM2 transcription through a TP53-independent pathway. Coactivates MMP7 transcription. Along with CTNNB1, coactivates MYC, JUN, FOSL1 and cyclin D1/CCND1 transcription. Alone or in combination with DDX5 and/or SRA1 non-coding RNA, plays a critical role in promoting the assembly of proteins required for the formation of the transcription initiation complex and chromatin remodeling leading to coactivation of MYOD1-dependent transcription. This helicase-independent activity is required for skeletal muscle cells to properly differentiate into myotubes. During epithelial-to-mesenchymal transition, coregulates SMAD-dependent transcriptional activity, directly controlling key effectors of differentiation, including miRNAs which in turn directly repress its expression. Plays a role in estrogen and testosterone signaling pathway at several levels. Mediates the use of alternative promoters in estrogen-responsive genes and regulates transcription and splicing of a large number of steroid hormone target genes. Contrary to splicing regulation activity, transcriptional coregulation of the estrogen receptor ESR1 is helicase-independent. Plays a role in innate immunity. Specifically restricts bunyavirus infection, including Rift Valley fever virus (RVFV) or La Crosse virus (LACV), but not vesicular stomatitis virus (VSV), in an interferon- and DROSHA-independent manner. Binds to RVFV RNA, likely via structured viral RNA elements. Promotes mRNA degradation mediated by the antiviral zinc-finger protein ZC3HAV1, in an ATPase-dependent manner. This chain is Probable ATP-dependent RNA helicase DDX17 (DDX17), found in Homo sapiens (Human).